The following is a 414-amino-acid chain: Esterase FrsA (414 aa).

It belongs to the FrsA family.

It carries out the reaction a carboxylic ester + H2O = an alcohol + a carboxylate + H(+). Its function is as follows. Catalyzes the hydrolysis of esters. The chain is Esterase FrsA from Escherichia coli O45:K1 (strain S88 / ExPEC).